Reading from the N-terminus, the 354-residue chain is Fructose-bisphosphate aldolase 2 (354 aa).

A D-glyceraldehyde 3-phosphate-binding site is contributed by S50. D83 (proton donor) is an active-site residue. The Zn(2+) site is built by H84, D105, E142, and H198. G199 is a dihydroxyacetone phosphate binding site. A Zn(2+)-binding site is contributed by H232. Residues 233-235 and 275-278 contribute to the dihydroxyacetone phosphate site; these read GSS and NIDT.

Belongs to the class II fructose-bisphosphate aldolase family. Homodimer. It depends on Zn(2+) as a cofactor.

The enzyme catalyses beta-D-fructose 1,6-bisphosphate = D-glyceraldehyde 3-phosphate + dihydroxyacetone phosphate. It participates in carbohydrate biosynthesis; Calvin cycle. The protein operates within carbohydrate degradation; glycolysis; D-glyceraldehyde 3-phosphate and glycerone phosphate from D-glucose: step 4/4. Functionally, catalyzes the aldol condensation of dihydroxyacetone phosphate (DHAP or glycerone-phosphate) with glyceraldehyde 3-phosphate (G3P) to form fructose 1,6-bisphosphate (FBP) in gluconeogenesis and the reverse reaction in glycolysis. This is Fructose-bisphosphate aldolase 2 (cfxB) from Cereibacter sphaeroides (Rhodobacter sphaeroides).